The primary structure comprises 894 residues: LRR receptor-like serine/threonine-protein kinase IOS1 (894 aa).

Positions 1-23 (MAFSSCFLLVLLQIFSALLLCLA) are cleaved as a signal peptide. Topologically, residues 24–515 (QDQSGFISLD…KKKKNTVIAP (492 aa)) are extracellular. 14 N-linked (GlcNAc...) asparagine glycosylation sites follow: asparagine 48, asparagine 95, asparagine 137, asparagine 179, asparagine 223, asparagine 230, asparagine 260, asparagine 287, asparagine 309, asparagine 338, asparagine 399, asparagine 441, asparagine 462, and asparagine 469. LRR repeat units lie at residues 431-457 (LTSL…NMET) and 459-479 (KLIN…LLDK). The helical transmembrane segment at 516 to 536 (VAASLVSVFLIGAGIVTFLIL) threads the bilayer. Topologically, residues 537–894 (KRKKRTKLGL…FTTELNPGAR (358 aa)) are cytoplasmic. A Phosphothreonine modification is found at threonine 577. The 273-residue stretch at 586–858 (NNFERVLGRG…QVVMDLKECL (273 aa)) folds into the Protein kinase domain. Residues 592–600 (LGRGGFGVV) and lysine 613 contribute to the ATP site. Tyrosine 658 carries the phosphotyrosine modification. Aspartate 710 functions as the Proton acceptor in the catalytic mechanism. Residue serine 744 is modified to Phosphoserine. A phosphothreonine mark is found at threonine 745 and threonine 750. Residue tyrosine 758 is modified to Phosphotyrosine.

The protein belongs to the protein kinase superfamily. Ser/Thr protein kinase family. Homodimerization. Interacts with BAK1 and FLS2; triggers FLS2-BAK1 complex formation upon microbe-associated molecular patterns (MAMPs) treatment. Also binds to CERK1 and EFR. Expressed in roots, cotyledons, leaves, flowers and siliques.

The protein resides in the cell membrane. Functionally, negatively regulates the abscisic acid (ABA) signaling pathway. Required for full susceptibility to filamentous (hemi)biotrophic oomycetes (e.g. H.arabidopsidis and P.parasitica) and fungal (e.g. E.cruciferarum) pathogens, probably by triggering the repression of ABA-sensitive COLD REGULATED and RESISTANCE TO DESICCATION genes during infection, but independently of immune responses. Involved in BAK1-dependent and BAK1-independent microbe-associated molecular patterns (MAMPs)-triggered immunity (PTI) leading to defense responses, including callose deposition and MAPK cascade activation, toward pathogenic bacteria (e.g. P.syringae). Required for chitin-mediated PTI. In Arabidopsis thaliana (Mouse-ear cress), this protein is LRR receptor-like serine/threonine-protein kinase IOS1.